Consider the following 633-residue polypeptide: Peptidoglycan D,D-transpeptidase MrdA (633 aa).

Residues 22–42 form a helical membrane-spanning segment; that stretch reads LVAFLGILLLTGVLIANLYNL. The Acyl-ester intermediate role is filled by Ser330.

This sequence belongs to the transpeptidase family. MrdA subfamily.

It localises to the cell inner membrane. It catalyses the reaction Preferential cleavage: (Ac)2-L-Lys-D-Ala-|-D-Ala. Also transpeptidation of peptidyl-alanyl moieties that are N-acyl substituents of D-alanine.. The protein operates within cell wall biogenesis; peptidoglycan biosynthesis. Catalyzes cross-linking of the peptidoglycan cell wall. This Escherichia coli O157:H7 protein is Peptidoglycan D,D-transpeptidase MrdA.